The primary structure comprises 209 residues: Glycerol-3-phosphate acyltransferase (209 aa).

Transmembrane regions (helical) follow at residues 7 to 27, 85 to 105, 117 to 137, 142 to 162, and 166 to 183; these read IELA…AIIV, AIIL…FFGF, VMFG…LFVA, ISSL…YLLA, and MAWV…FWRH.

The protein belongs to the PlsY family. As to quaternary structure, probably interacts with PlsX.

It is found in the cell inner membrane. It catalyses the reaction an acyl phosphate + sn-glycerol 3-phosphate = a 1-acyl-sn-glycero-3-phosphate + phosphate. It participates in lipid metabolism; phospholipid metabolism. Functionally, catalyzes the transfer of an acyl group from acyl-phosphate (acyl-PO(4)) to glycerol-3-phosphate (G3P) to form lysophosphatidic acid (LPA). This enzyme utilizes acyl-phosphate as fatty acyl donor, but not acyl-CoA or acyl-ACP. The polypeptide is Glycerol-3-phosphate acyltransferase (Hydrogenovibrio crunogenus (strain DSM 25203 / XCL-2) (Thiomicrospira crunogena)).